The sequence spans 693 residues: Sulfite reductase 1 [ferredoxin], chloroplastic (693 aa).

The N-terminal 62 residues, 1–62 (MTTSFGAAIN…PSSIVRAVST (62 aa)), are a transit peptide targeting the chloroplast. The [4Fe-4S] cluster site is built by cysteine 502, cysteine 508, cysteine 548, and cysteine 552. Residue cysteine 552 coordinates siroheme.

Belongs to the nitrite and sulfite reductase 4Fe-4S domain family. In terms of assembly, monomer. Interacts with ferredoxin. Siroheme serves as cofactor. The cofactor is [4Fe-4S] cluster. Phosphorylated; this phosphorylation reduces DNA-binding. As to expression, expressed in leaves, stems, roots and petals.

The protein resides in the plastid. Its subcellular location is the chloroplast stroma. The protein localises to the chloroplast nucleoid. It is found in the plastid stroma. The enzyme catalyses hydrogen sulfide + 6 oxidized [2Fe-2S]-[ferredoxin] + 3 H2O = sulfite + 6 reduced [2Fe-2S]-[ferredoxin] + 7 H(+). Functionally, essential protein with sulfite reductase activity required in assimilatory sulfate reduction pathway during both primary and secondary metabolism and thus involved in development and growth. In terms of biological role, DNA-binding protein that binds to both double-stranded and single-stranded DNA without significant sequence specificity to reversibly repress the transcriptional activity of chloroplast nucleoids by promoting DNA compaction and possibly regulate DNA replication. The polypeptide is Sulfite reductase 1 [ferredoxin], chloroplastic (SIR1) (Nicotiana tabacum (Common tobacco)).